The chain runs to 389 residues: Cellobiose 2-epimerase (389 aa).

Belongs to the cellobiose 2-epimerase family.

It is found in the cytoplasm. The catalysed reaction is D-cellobiose = beta-D-glucosyl-(1-&gt;4)-D-mannopyranose. Enhanced by Mg(2+) and Ca(2+) ions, ethylenediaminetetraacetic acid, ethylene glycol tetraacetic acid and citrate. Inhibited by Al(3+), Fe(3+), Co(2+), Cu(2+), Zn(2+), Pb(2+) and Ag(+) ions, iodoacetate, 4-chloromercuribenzoate and N-bromosuccinimide. Its function is as follows. Catalyzes the reversible epimerization of cellobiose to 4-O-beta-D-glucopyranosyl-D-mannose (Glc-Man). Can also epimerize cellotriose to Glc-Glc-Man, cellotetraose to Glc-Glc-Glc-Man, and lactose to epilactose. The protein is Cellobiose 2-epimerase (ce-ne1) of Ruminococcus albus.